We begin with the raw amino-acid sequence, 390 residues long: Sister chromatid cohesion protein DCC1 (390 aa).

It belongs to the DCC1 family. Component of the ctf18-RFC complex which consists of ctf18, ctf8, dscc1 and the RFC complex.

It localises to the nucleus. In terms of biological role, loads pcna onto primed templates regulating velocity, spacing and restart activity of replication forks. May couple DNA replication to sister chromatid cohesion. The polypeptide is Sister chromatid cohesion protein DCC1 (dscc1) (Xenopus laevis (African clawed frog)).